A 358-amino-acid chain; its full sequence is Peptide chain release factor 1 (358 aa).

Position 233 is an N5-methylglutamine (Gln-233).

Belongs to the prokaryotic/mitochondrial release factor family. Methylated by PrmC. Methylation increases the termination efficiency of RF1.

It is found in the cytoplasm. Peptide chain release factor 1 directs the termination of translation in response to the peptide chain termination codons UAG and UAA. This Flavobacterium johnsoniae (strain ATCC 17061 / DSM 2064 / JCM 8514 / BCRC 14874 / CCUG 350202 / NBRC 14942 / NCIMB 11054 / UW101) (Cytophaga johnsonae) protein is Peptide chain release factor 1.